The sequence spans 317 residues: Large ribosomal subunit protein uL10 (317 aa).

Y24 carries the phosphotyrosine modification. T59 is modified (phosphothreonine). K264 is covalently cross-linked (Glycyl lysine isopeptide (Lys-Gly) (interchain with G-Cter in ubiquitin)). The disordered stretch occupies residues 294-317; sequence APAKVEAKEESEESDEDMGFGLFD. K297 participates in a covalent cross-link: Glycyl lysine isopeptide (Lys-Gly) (interchain with G-Cter in SUMO1); alternate. A Glycyl lysine isopeptide (Lys-Gly) (interchain with G-Cter in SUMO2); alternate cross-link involves residue K297. The segment covering 302 to 311 has biased composition (acidic residues); that stretch reads EESEESDEDM. S304 and S307 each carry phosphoserine.

The protein belongs to the universal ribosomal protein uL10 family. P0 forms a pentameric complex by interaction with dimers of P1 and P2. Identified in a IGF2BP1-dependent mRNP granule complex containing untranslated mRNAs. Interacts with APEX1. Interacts with FMR1 isoform 6. In terms of processing, ubiquitinated at Lys-264 by RNF14 and RNF25 in response to ribosome collisions (ribosome stalling).

It localises to the nucleus. The protein resides in the cytoplasm. Its function is as follows. Ribosomal protein P0 is the functional equivalent of E.coli protein L10. The protein is Large ribosomal subunit protein uL10 (RPLP0) of Homo sapiens (Human).